Here is a 72-residue protein sequence, read N- to C-terminus: DNA-directed RNA polymerase subunit omega (72 aa).

The protein belongs to the RNA polymerase subunit omega family. The RNAP catalytic core consists of 2 alpha, 1 beta, 1 beta' and 1 omega subunit. When a sigma factor is associated with the core the holoenzyme is formed, which can initiate transcription.

The enzyme catalyses RNA(n) + a ribonucleoside 5'-triphosphate = RNA(n+1) + diphosphate. Promotes RNA polymerase assembly. Latches the N- and C-terminal regions of the beta' subunit thereby facilitating its interaction with the beta and alpha subunits. In Francisella philomiragia subsp. philomiragia (strain ATCC 25017 / CCUG 19701 / FSC 153 / O#319-036), this protein is DNA-directed RNA polymerase subunit omega.